The following is a 129-amino-acid chain: Trefoil factor 2 (129 aa).

An N-terminal signal peptide occupies residues 1-23 (MGRRDAQLLAALLVLGLCALAGS). P-type domains lie at 29 to 73 (CQCS…FHPL) and 79 to 122 (DQCV…FFPK). 7 disulfides stabilise this stretch: Cys29-Cys127, Cys31-Cys58, Cys42-Cys57, Cys52-Cys69, Cys81-Cys107, Cys91-Cys106, and Cys101-Cys118.

As to expression, stomach.

The protein localises to the secreted. Functionally, inhibits gastrointestinal motility and gastric acid secretion. Could function as a structural component of gastric mucus, possibly by stabilizing glycoproteins in the mucus gel through interactions with carbohydrate side chains. This Homo sapiens (Human) protein is Trefoil factor 2 (TFF2).